Here is a 640-residue protein sequence, read N- to C-terminus: MTDTPSASDAEAPLRQAAPLWGAALIKDEVTRLPDAPGVYRMIGEADEVLYVGKAKSLKKRVVQYAQGRFHTNRIANMVDATRAMEFITTRTEADALLLEINLIKQLKPRFNVLLRDDKSFPEIVIRRDHDAPQLRKHRGAHTIKGDYFGPFASAWAVNRTLNTLQKAFLLRSCSDSVYDSRDRPCMLYQIKRCAAPCTGLIGKDDYQALVDQAEAFLRGKSRAVMATMAKAMEEAAEELEFERAARLRDRIRALSAVAQETQINPETVEEADVVALHVEGGQACVQVFFFRAGQNWGNRAYFPRITGAADDPEDETVTEEQRIITAFLGQFYDDKPIPRLILANVQPAESELLSEAFALKSGRKVEIAVPKRGEKADLVQHVLTNAREALGRKMAEGSAQTKLLAGVAEAFKLDAPPERIEVYDNSHIQGANAVGGMIVAGPEGFMKGQYRKFNIKSTELTPGDDYGMMKEVLRRRFARLVKEEEEGDDANRPDLVLVDGGQGQLDAAIEIMADLGVDDIAVVGVAKGPDRDAGLERFFIPGQTPFMLEPKSPVLYYLQRLRDEAHRFAIGAHRTRRSMDLKKNPLDEIEGVGPGRKKALLHAFGSAKGVGRASVEDLVKVDGVSQALAERIFGFFRKG.

The region spanning Asp-35–Val-113 is the GIY-YIG domain. The 36-residue stretch at Arg-223–Val-258 folds into the UVR domain.

It belongs to the UvrC family. As to quaternary structure, interacts with UvrB in an incision complex.

The protein resides in the cytoplasm. In terms of biological role, the UvrABC repair system catalyzes the recognition and processing of DNA lesions. UvrC both incises the 5' and 3' sides of the lesion. The N-terminal half is responsible for the 3' incision and the C-terminal half is responsible for the 5' incision. The sequence is that of UvrABC system protein C from Caulobacter vibrioides (strain ATCC 19089 / CIP 103742 / CB 15) (Caulobacter crescentus).